A 127-amino-acid polypeptide reads, in one-letter code: Large ribosomal subunit protein uL24 (127 aa).

It belongs to the universal ribosomal protein uL24 family. Part of the 50S ribosomal subunit.

In terms of biological role, one of two assembly initiator proteins, it binds directly to the 5'-end of the 23S rRNA, where it nucleates assembly of the 50S subunit. Its function is as follows. One of the proteins that surrounds the polypeptide exit tunnel on the outside of the subunit. This chain is Large ribosomal subunit protein uL24, found in Leptospira biflexa serovar Patoc (strain Patoc 1 / ATCC 23582 / Paris).